A 93-amino-acid polypeptide reads, in one-letter code: Small ribosomal subunit protein uS19 (93 aa).

Belongs to the universal ribosomal protein uS19 family.

Its function is as follows. Protein S19 forms a complex with S13 that binds strongly to the 16S ribosomal RNA. This Alkaliphilus metalliredigens (strain QYMF) protein is Small ribosomal subunit protein uS19.